A 143-amino-acid chain; its full sequence is Ribonuclease P protein component (143 aa).

Residues 111-143 form a disordered region; that stretch reads RVKRKGGGPGGNRRSAPPGSAPLTDDGRLRGEP.

This sequence belongs to the RnpA family. Consists of a catalytic RNA component (M1 or rnpB) and a protein subunit.

It carries out the reaction Endonucleolytic cleavage of RNA, removing 5'-extranucleotides from tRNA precursor.. Its function is as follows. RNaseP catalyzes the removal of the 5'-leader sequence from pre-tRNA to produce the mature 5'-terminus. It can also cleave other RNA substrates such as 4.5S RNA. The protein component plays an auxiliary but essential role in vivo by binding to the 5'-leader sequence and broadening the substrate specificity of the ribozyme. The protein is Ribonuclease P protein component of Deinococcus geothermalis (strain DSM 11300 / CIP 105573 / AG-3a).